A 380-amino-acid polypeptide reads, in one-letter code: Shedu protein SduA (380 aa).

In terms of biological role, only component of antiviral defense system Shedu. Expression of Shedu in B.subtilis (strain BEST7003) confers resistance to phages phi105, phi29, rho14 and to a lesser extent to SPP1. May be an endonuclease. This is Shedu protein SduA from Bacillus cereus (strain B4264).